A 471-amino-acid polypeptide reads, in one-letter code: GDP-mannose transporter (471 aa).

Positions 1 to 13 (MSSGSRSFFTPQE) are enriched in polar residues. Residues 1 to 52 (MSSGSRSFFTPQETRLELPQGAAHQTPDITRPASPSENDRAPFLNGGPSDAR) form a disordered region. Over 1-70 (MSSGSRSFFT…ALRNDSEKPA (70 aa)) the chain is Cytoplasmic. Residues 71–91 (VGIMALAPILCYCAASITMTV) traverse the membrane as a helical segment. The Lumenal portion of the chain corresponds to 92–101 (VNKFTVSGRG). The chain crosses the membrane as a helical span at residues 102 to 122 (FNMNLLVLLIQSTVGVTCVWI). Over 123–139 (AERAGLIQLRGLNAKDA) the chain is Cytoplasmic. A helical transmembrane segment spans residues 140 to 160 (WNWMPLSIMLVFVIWTGSKAL). Over 161-166 (QYLNIS) the chain is Lumenal. A glycan (N-linked (GlcNAc...) asparagine) is linked at asparagine 164. The helical transmembrane segment at 167–187 (VYTIFKNLTIILIAYGEVMWF) threads the bilayer. The Cytoplasmic portion of the chain corresponds to 188-193 (GGRVTR). The helical transmembrane segment at 194-214 (IVLCSFLFMVLSSVIAAWSDI) threads the bilayer. Residues 215 to 279 (SNVFAIGNLS…DVIEGFQGYG (65 aa)) are Lumenal-facing. Asparagine 222 carries an N-linked (GlcNAc...) asparagine glycan. Residues 280 to 300 (LLSSGYVWMALNCICSATYVL) form a helical membrane-spanning segment. At 301–315 (LMRKRIKVTGFKDWD) the chain is on the cytoplasmic side. A helical transmembrane segment spans residues 316 to 336 (TMFYNNFLSIPVLLLMSFLVE). Residues 337-354 (DWSYANLHKNFPDDKQTK) are Lumenal-facing. The chain crosses the membrane as a helical span at residues 355–375 (LISAIVFSGACAILISYTTAW). Residues 376-383 (CIRATSST) lie on the Cytoplasmic side of the membrane. A helical membrane pass occupies residues 384 to 404 (TYSMVGALNKLPVALSGMVFF). Residues 405–408 (HDPP) lie on the Lumenal side of the membrane. A helical membrane pass occupies residues 409-429 (VTFSSVSAIAVGFFAGLVYAF). At 430–471 (GKNKQAEAAKLGGHASANGSSSMSGSKDGSSLPMHTFNDRKD) the chain is on the cytoplasmic side. A compositionally biased stretch (low complexity) spans 442–460 (GHASANGSSSMSGSKDGSS). Residues 442-471 (GHASANGSSSMSGSKDGSSLPMHTFNDRKD) are disordered.

Belongs to the TPT transporter family. SLC35D subfamily. In terms of assembly, homooligomer.

Its subcellular location is the golgi apparatus membrane. It is found in the cytoplasmic vesicle membrane. The protein resides in the endoplasmic reticulum membrane. In terms of biological role, involved in the import of GDP-mannose from the cytoplasm into the Golgi lumen. In Mycosarcoma maydis (Corn smut fungus), this protein is GDP-mannose transporter (VRG4).